The primary structure comprises 157 residues: DNA gyrase inhibitor (157 aa).

It belongs to the DNA gyrase inhibitor family. In terms of assembly, interacts with DNA gyrase.

It is found in the cytoplasm. Inhibits the supercoiling activity of DNA gyrase. Acts by inhibiting DNA gyrase at an early step, prior to (or at the step of) binding of DNA by the gyrase. It protects cells against toxins that target DNA gyrase, by inhibiting activity of these toxins and reducing the formation of lethal double-strand breaks in the cell. The sequence is that of DNA gyrase inhibitor from Enterobacter lignolyticus (strain SCF1).